A 101-amino-acid polypeptide reads, in one-letter code: Small ribosomal subunit protein eS24 (101 aa).

The protein belongs to the eukaryotic ribosomal protein eS24 family.

The polypeptide is Small ribosomal subunit protein eS24 (Methanocaldococcus jannaschii (strain ATCC 43067 / DSM 2661 / JAL-1 / JCM 10045 / NBRC 100440) (Methanococcus jannaschii)).